A 199-amino-acid chain; its full sequence is uncharacterized protein (199 aa).

The next 3 membrane-spanning stretches (helical) occupy residues 22–44 (VVVVGLYYGFLTTFSIGPSYLFL), 65–87 (TGFIAGQLMMFISIYYAPLHLAL), and 91–108 (HTITVLALPYLLFHFFFW).

It belongs to the ycf1 family.

It localises to the mitochondrion membrane. This is an uncharacterized protein from Arabidopsis thaliana (Mouse-ear cress).